Consider the following 145-residue polypeptide: Antiholin-like protein LrgA (145 aa).

A run of 4 helical transmembrane segments spans residues 10 to 30 (PAHFFHQVIVIALVLFVSKII), 33 to 53 (FMPIPMPASVIGLVLLFVLLC), 72 to 92 (NIGLLFVPAGISVVNSLGVIS), and 96 to 116 (FLIIGLIIVSTILLLICTGYV).

It belongs to the CidA/LrgA family. LrgA subfamily.

Its subcellular location is the cell membrane. Inhibits the expression or activity of extracellular murein hydrolases by interacting, possibly with LrgB, with the holin-like proteins CidA and/or CidB. The LrgAB and CidAB proteins may affect the proton motive force of the membrane. May be involved in programmed cell death (PCD), possibly triggering PCD in response to antibiotics and environmental stresses. This chain is Antiholin-like protein LrgA, found in Staphylococcus aureus (strain JH1).